The primary structure comprises 819 residues: Pentatricopeptide repeat-containing protein At5g02860 (819 aa).

The interval 57 to 93 is disordered; sequence QNPNSRQPISSQTSRNRNRTRIGKSRDPNLGKPWSYH. 18 PPR repeats span residues 172 to 206, 207 to 241, 242 to 277, 278 to 312, 313 to 347, 348 to 382, 383 to 417, 418 to 452, 453 to 487, 488 to 522, 523 to 557, 558 to 592, 593 to 627, 628 to 662, 663 to 697, 698 to 732, 733 to 767, and 768 to 802; these read DNSV…GFSL, DVYS…GCKP, TLIT…GIAP, DAYT…GFSY, DKVT…GFSP, SIVT…GTKP, DVFT…GCKP, NICT…GLSP, DIVT…GFVP, ERET…GVTP, DLST…RCKP, NELT…VIEP, RAVL…GFSP, DITT…GFTP, SMAT…GIKP, DIIS…GIVP, DVIT…GCRP, and NQNT…DPHA.

This sequence belongs to the PPR family. P subfamily.

This chain is Pentatricopeptide repeat-containing protein At5g02860, found in Arabidopsis thaliana (Mouse-ear cress).